A 109-amino-acid polypeptide reads, in one-letter code: Set1 complex component sdc1 (109 aa).

A disordered region spans residues 49 to 109 (QQKQKEIVNQ…SSNPGKNSAS (61 aa)). Positions 73 to 87 (STPTMAEQVQTSFSN) are enriched in polar residues. The span at 88–101 (PASTPLTQTSSPSS) shows a compositional bias: low complexity.

Belongs to the dpy-30 family. In terms of assembly, component of the COMPASS (Set1C) complex composed of ash2, sdc1, set1, shg1, spp1, swd1, swd2 and swd3. Component of the Lid2 complex composed of ash2, jmj3, lid2, sdc1 and snt2.

Its subcellular location is the nucleus. The COMPASS (Set1C) complex specifically mono-, di- and trimethylates histone H3 to form H3K4me1/2/3, which subsequently activates gene expression by regulating transcription elongation and plays a role in telomere length maintenance. This chain is Set1 complex component sdc1 (sdc1), found in Schizosaccharomyces pombe (strain 972 / ATCC 24843) (Fission yeast).